Here is a 170-residue protein sequence, read N- to C-terminus: 4-hydroxyphenylacetate 3-monooxygenase reductase component (170 aa).

The protein belongs to the non-flavoprotein flavin reductase family. HpaC subfamily. Homodimer. 4-HPA 3-monooxygenase consists of a reductase component HpaC and an oxygenase component HpaB.

The enzyme catalyses a reduced flavin + NAD(+) = an oxidized flavin + NADH + 2 H(+). It participates in aromatic compound metabolism; 4-hydroxyphenylacetate degradation; pyruvate and succinate semialdehyde from 4-hydroxyphenylacetate: step 1/7. Its function is as follows. Catalyzes the reduction of free flavins (FMN, FAD and riboflavin) by NADH. Subsequently, the reduced flavins diffuse to the large HpaB component or to other electron acceptors such as cytochrome c and Fe(3+) ion. In Escherichia coli, this protein is 4-hydroxyphenylacetate 3-monooxygenase reductase component (hpaC).